The following is a 241-amino-acid chain: Ubiquinone biosynthesis O-methyltransferase (241 aa).

S-adenosyl-L-methionine is bound by residues Arg44, Gly64, Asp85, and Met129.

This sequence belongs to the methyltransferase superfamily. UbiG/COQ3 family.

The enzyme catalyses a 3-demethylubiquinol + S-adenosyl-L-methionine = a ubiquinol + S-adenosyl-L-homocysteine + H(+). It carries out the reaction a 3-(all-trans-polyprenyl)benzene-1,2-diol + S-adenosyl-L-methionine = a 2-methoxy-6-(all-trans-polyprenyl)phenol + S-adenosyl-L-homocysteine + H(+). The protein operates within cofactor biosynthesis; ubiquinone biosynthesis. Its function is as follows. O-methyltransferase that catalyzes the 2 O-methylation steps in the ubiquinone biosynthetic pathway. This chain is Ubiquinone biosynthesis O-methyltransferase, found in Serratia proteamaculans (strain 568).